The primary structure comprises 57 residues: MAVPKRRKSRSNTRSRRSQWKAAKTELVGVTVAGHAHKVPRRLLKAARLGLIDFDKR.

Over residues 1–19 (MAVPKRRKSRSNTRSRRSQ) the composition is skewed to basic residues. The tract at residues 1-22 (MAVPKRRKSRSNTRSRRSQWKA) is disordered.

It belongs to the bacterial ribosomal protein bL32 family.

The chain is Large ribosomal subunit protein bL32 from Mycobacterium tuberculosis (strain ATCC 25177 / H37Ra).